A 280-amino-acid polypeptide reads, in one-letter code: Phosphatidylglycerol--prolipoprotein diacylglyceryl transferase (280 aa).

A run of 3 helical transmembrane segments spans residues 21–41, 54–74, and 88–108; these read WYGI…ISEG, LLLW…VIFE, and IWNG…VLLI. Residue R136 coordinates a 1,2-diacyl-sn-glycero-3-phospho-(1'-sn-glycerol). A run of 3 helical transmembrane segments spans residues 176 to 196, 206 to 226, and 236 to 256; these read QPTF…ILSL, GEVF…VEGM, and IIRV…ILWI.

It belongs to the Lgt family.

It is found in the cell membrane. The catalysed reaction is L-cysteinyl-[prolipoprotein] + a 1,2-diacyl-sn-glycero-3-phospho-(1'-sn-glycerol) = an S-1,2-diacyl-sn-glyceryl-L-cysteinyl-[prolipoprotein] + sn-glycerol 1-phosphate + H(+). The protein operates within protein modification; lipoprotein biosynthesis (diacylglyceryl transfer). Catalyzes the transfer of the diacylglyceryl group from phosphatidylglycerol to the sulfhydryl group of the N-terminal cysteine of a prolipoprotein, the first step in the formation of mature lipoproteins. The protein is Phosphatidylglycerol--prolipoprotein diacylglyceryl transferase of Lactobacillus acidophilus (strain ATCC 700396 / NCK56 / N2 / NCFM).